The chain runs to 152 residues: Protein-export protein SecB (152 aa).

This sequence belongs to the SecB family. Homotetramer, a dimer of dimers. One homotetramer interacts with 1 SecA dimer.

Its subcellular location is the cytoplasm. In terms of biological role, one of the proteins required for the normal export of preproteins out of the cell cytoplasm. It is a molecular chaperone that binds to a subset of precursor proteins, maintaining them in a translocation-competent state. It also specifically binds to its receptor SecA. This chain is Protein-export protein SecB, found in Dechloromonas aromatica (strain RCB).